The sequence spans 520 residues: Sensory neuron membrane protein 1 (520 aa).

At 1 to 5 (MKPKK) the chain is on the cytoplasmic side. The helical transmembrane segment at 6-26 (LGIIGGSLLAFGILICAIAFP) threads the bilayer. At 27–451 (PFLRSQVKKQ…KLKTVFKTIS (425 aa)) the chain is on the extracellular side. 3 N-linked (GlcNAc...) asparagine glycosylation sites follow: Asn64, Asn224, and Asn268. Cystine bridges form between Cys264/Cys329, Cys293/Cys348, and Cys331/Cys337. Residues 452–472 (IVGFMKWFTIVSGTCVSGAAA) traverse the membrane as a helical segment. The Cytoplasmic portion of the chain corresponds to 473–520 (ALFFKNKDKNKLDITKVTPQKGEEKKWPNQMTISTIQSAAVPPNLDAD).

Belongs to the CD36 family.

The protein localises to the cell membrane. Plays an olfactory role that is not restricted to pheromone sensitivity. This is Sensory neuron membrane protein 1 from Apis mellifera (Honeybee).